A 428-amino-acid chain; its full sequence is Histidine--tRNA ligase (428 aa).

The protein belongs to the class-II aminoacyl-tRNA synthetase family. In terms of assembly, homodimer.

The protein localises to the cytoplasm. The catalysed reaction is tRNA(His) + L-histidine + ATP = L-histidyl-tRNA(His) + AMP + diphosphate + H(+). The polypeptide is Histidine--tRNA ligase (Lactobacillus helveticus (strain DPC 4571)).